The primary structure comprises 130 residues: Small ribosomal subunit protein uS9 (130 aa).

This sequence belongs to the universal ribosomal protein uS9 family.

This is Small ribosomal subunit protein uS9 from Herminiimonas arsenicoxydans.